Consider the following 692-residue polypeptide: MNLRSVFTVEQQRILQRYYENGMTNQSKNCFQLILQCAQETKLDFSVVRTWVGNKRRKMSSKSCESGAAGTVSGTSLAAPDITVRNVVNIARPSSQQSSWTSANNDVIVTGIYSPVSSSSKQGTTKHTNTQITEAHKIPIQKAANKNDTELQLHIPVQRQVAHCKNASVLLGEKTIILSRQTSVLNAGNSVYNHTKKSYGSSPVQASEMTVPQKPSVCQRPCKIEPVGIQRSYKPEHAGLASHNLCGQKPTIRDPCCRTQNLEIREVFSLAVSDYPQRILGGNSTQKPASAEGTCLSIAMETGDAEDEYAREEELASMGAQITSYSRFYESGNSLRAENQSTNLPGPGRNLPNSQMVNIRDLSDNVLYQTRDYHLTPRTSLHTASSTMYSNTNPSRSNFSPHFVSSNQLRLSQNQNNYQISGNLSVPWITGCSRKRALQDRTQFSDRDLATLKKYWDNGMTSLGSVCREKIEAVAIELNVDCEIVRTWIGNRRRKYRLMGIEVPPPRGGPADFSEQPESGSLSALTPGEEAGPEVGEDNDRNDEVSICLSEASSQEESNELIPNETRAHKDEEHQAVSADNVKIEIIDDEESDMISNSEVEQENSLLDYKNEEVRFIENELEIQKQKYFKLQSFVRNLILAMKADDKDQQQALLSDLPPELEEMDCSHASPDPDDTSLSVSSLSEKNASDSL.

The homeobox 1 DNA-binding region spans 3-63; it reads LRSVFTVEQQ…NKRRKMSSKS (61 aa). The span at 117–133 shows a compositional bias: polar residues; it reads SSSSKQGTTKHTNTQIT. The tract at residues 117-136 is disordered; that stretch reads SSSSKQGTTKHTNTQITEAH. Glycyl lysine isopeptide (Lys-Gly) (interchain with G-Cter in SUMO2) cross-links involve residues lysine 137, lysine 142, lysine 146, lysine 165, lysine 174, lysine 196, lysine 214, lysine 223, and lysine 234. A DNA-binding region (homeobox 2) is located at residues 437-500; the sequence is ALQDRTQFSD…NRRRKYRLMG (64 aa). Disordered stretches follow at residues 505–541 and 647–692; these read PPRGGPADFSEQPESGSLSALTPGEEAGPEVGEDNDR and KDQQ…SDSL. Polar residues predominate over residues 676-692; that stretch reads TSLSVSSLSEKNASDSL.

The protein resides in the nucleus. This is Highly divergent homeobox (Hdx) from Mus musculus (Mouse).